Reading from the N-terminus, the 530-residue chain is Sulfate adenylyltransferase (530 aa).

The interval methionine 1–tyrosine 178 is N-terminal. The tract at residues aspartate 179–lysine 410 is catalytic. Residue glutamine 208 coordinates sulfate. ATP is bound by residues glutamine 208–asparagine 211 and glycine 304–histidine 307. Catalysis depends on residues threonine 209, arginine 210, and asparagine 211. Residue arginine 210 participates in sulfate binding. Alanine 308 serves as a coordination point for sulfate. Valine 348 is a binding site for ATP. The segment at glutamine 411–serine 530 is required for oligomerization; adenylyl-sulfate kinase-like.

Belongs to the sulfate adenylyltransferase family. Homohexamer. Dimer of trimers.

The protein localises to the cytoplasm. It carries out the reaction sulfate + ATP + H(+) = adenosine 5'-phosphosulfate + diphosphate. It participates in sulfur metabolism; hydrogen sulfide biosynthesis; sulfite from sulfate: step 1/3. Catalyzes the first intracellular reaction of sulfate assimilation, forming adenosine-5'-phosphosulfate (APS) from inorganic sulfate and ATP. Plays an important role in sulfate activation as a component of the biosynthesis pathway of sulfur-containing amino acids. The chain is Sulfate adenylyltransferase from Debaryomyces hansenii (strain ATCC 36239 / CBS 767 / BCRC 21394 / JCM 1990 / NBRC 0083 / IGC 2968) (Yeast).